Reading from the N-terminus, the 681-residue chain is Amine oxidase [copper-containing] alpha 3, peroxisomal (681 aa).

Substrate is bound at residue 323-334 (YLDCGDFGCGQC). D325 functions as the Proton acceptor in the catalytic mechanism. The cysteines at positions 344 and 370 are disulfide-linked. 410-415 (VGNYDY) lines the substrate pocket. Y413 serves as the catalytic Schiff-base intermediate with substrate; via topaquinone. Y413 is subject to 2',4',5'-topaquinone. H470 and H472 together coordinate Cu cation. 3 residues coordinate Mn(2+): D481, D621, and I622. Residue H632 coordinates Cu cation.

The protein belongs to the copper/topaquinone oxidase family. Post-translationally, topaquinone (TPQ) is generated by copper-dependent autoxidation of a specific tyrosyl residue. In terms of tissue distribution, mostly expressed in stems, and, at lower levels, in flowers and leaves. Mainly detectable in stipules, hypocotyls and roots.

The protein localises to the peroxisome. The enzyme catalyses a primary methyl amine + O2 + H2O = an aldehyde + H2O2 + NH4(+). It participates in amine and polyamine degradation; putrescine degradation. Functionally, copper amine oxidase that can use putrescine and spermidine as substrates. Involved in putrescine catabolism in peroxisomes. The chain is Amine oxidase [copper-containing] alpha 3, peroxisomal from Arabidopsis thaliana (Mouse-ear cress).